Reading from the N-terminus, the 422-residue chain is Keratin, type I cytoskeletal 23 (422 aa).

Over residues 1–24 (MNSSHSFNQTYSASVHSLGSTRGR) the composition is skewed to polar residues. The disordered stretch occupies residues 1 to 35 (MNSSHSFNQTYSASVHSLGSTRGRQGSCHRAPSVH). Residues 1-71 (MNSSHSFNQT…GRSSPLLGGN (71 aa)) form a head region. The tract at residues 72–107 (GKATMQNLNDRLATYLEKVRALEEANSKLETRILRW) is coil 1A. In terms of domain architecture, IF rod spans 72-382 (GKATMQNLND…RLLEGDTEGT (311 aa)). The linker 1 stretch occupies residues 108–125 (HQEREPSHRKDYSQYEEN). The segment at 126-217 (ISRLQEQIVD…KRHEQEMEEN (92 aa)) is coil 1B. The linker 12 stretch occupies residues 218–240 (HLPSDFKVSVKVDTTPGEDLIKV). The coil 2 stretch occupies residues 241 to 378 (LEDMRQEYEL…ATYRRLLEGD (138 aa)). The segment at 379-422 (TEGTMDGSESRLKGSEASTIKAITQESVNGRIVLSQVNEIQKHI) is rod-like helical tail.

The protein belongs to the intermediate filament family. In terms of assembly, heterotetramer of two type I and two type II keratins.

In Mus musculus (Mouse), this protein is Keratin, type I cytoskeletal 23 (Krt23).